The primary structure comprises 1079 residues: MTNTKYYPEVSSNADFAAIEREILKLWQDNNIFQKSIDNRIKDAEFIFYDGPPFANGLPHYGHLLTGFIKDVYARYQTIKGKKVERRFGWDCHGLPAEMQSEQELGISGRLAITNFSIEKFNSHCRASVMKYTGEWEQYVTRQARWVDFKNSYKTMDTHFMESVLWAFKELYNKGLLYESMRVMPYSWACETPLSHFETRLDNSYRERADKAVTVSFMLRDKLPHSEYKEYRIFAWTTTPWTLPANLALAVGSDIDYALVPKNDICYIIAAASVSKYAKELELKGDEQFTIIKGSELEGLRYKPLFNYFENHPNSFKIFACDFVVEGDGTGVVHMAPGFGEDDQILCESKGIELVCPVDNSGKFTKEIPDLEGLQVFDANDKIIIKLKEQGNWLKTEQYIHNYPHCWRTDTPLIYKAVPSWYVKVTNFKDRIVELNQQINWIPSHVKDNVFGKWLENARDWSISRNRFWGTPLPVWKSDDPKYPRIDVYGSIEELEKDFGVKVTDLHRPFIDELTRANPDDPTGKSTMRRIEDVFDCWFESGSMPYSQAHYPFENKKWFEDHFPADFIVEYVAQTRGWFYTLMVLSTALFDRPPFLNCICHGVILDTTGQKLSKRLNNYADPLELFDKYGSDALRITMLSSNVVKGQELLIDKDGKMVFDTLRLFIKPIWNAYHFFTMYANADSLKGKSDFASENVLDIYILSKLKIAVQKIEKSLDNFDTQAAYHQVSEFFEVLNNWYIRRSRARFWKSEKDADKQNAYNTLYSCLETMAIAMSALVPMISEAIYLGLHNTVIPQLDYGISGDKPGAQDPIIKSQDGIRGCRNDNLSVHLCNYPKLSNFEVNHELVATMDTVLDICSNSLFIRSNENVRVRQPLASITIISKHNDKLKDFEDLIKDEINVKAIIYRDDLENYATTKLSLNFPMLGKRLPYKMKEIIAASKKGEWEATASALAICGETLKSEEYKLVLEPYSHIKGAASFADNSSLLILDLELTPELIKEGIARDIVRFIQQARKDADCSITDRILIEIISESDLSKIINIYGDYIKEQTLSEFAKDFTPDYVNEIELENHKIQLKIKR.

The short motif at 53–63 is the 'HIGH' region element; it reads PFANGLPHYGH. The 'KMSKS' region signature appears at 611–615; the sequence is KLSKR. Lys-614 provides a ligand contact to ATP.

This sequence belongs to the class-I aminoacyl-tRNA synthetase family. IleS type 2 subfamily. In terms of assembly, monomer. Zn(2+) is required as a cofactor.

The protein localises to the cytoplasm. It carries out the reaction tRNA(Ile) + L-isoleucine + ATP = L-isoleucyl-tRNA(Ile) + AMP + diphosphate. In terms of biological role, catalyzes the attachment of isoleucine to tRNA(Ile). As IleRS can inadvertently accommodate and process structurally similar amino acids such as valine, to avoid such errors it has two additional distinct tRNA(Ile)-dependent editing activities. One activity is designated as 'pretransfer' editing and involves the hydrolysis of activated Val-AMP. The other activity is designated 'posttransfer' editing and involves deacylation of mischarged Val-tRNA(Ile). The polypeptide is Isoleucine--tRNA ligase (Rickettsia canadensis (strain McKiel)).